The primary structure comprises 812 residues: 1,4-alpha-glucan branching enzyme GlgB (812 aa).

Residues 1–11 (MNNGDVNNGTA) show a composition bias toward polar residues. The tract at residues 1-83 (MNNGDVNNGT…SALPADPPAV (83 aa)) is disordered. Over residues 49 to 64 (SSASAQPGQTADDPAV) the composition is skewed to low complexity. Over residues 65 to 83 (PSAPPSAPPSALPADPPAV) the composition is skewed to pro residues. The active-site Nucleophile is D490. Catalysis depends on E543, which acts as the Proton donor.

This sequence belongs to the glycosyl hydrolase 13 family. GlgB subfamily. In terms of assembly, monomer.

The catalysed reaction is Transfers a segment of a (1-&gt;4)-alpha-D-glucan chain to a primary hydroxy group in a similar glucan chain.. Its pathway is glycan biosynthesis; glycogen biosynthesis. Functionally, catalyzes the formation of the alpha-1,6-glucosidic linkages in glycogen by scission of a 1,4-alpha-linked oligosaccharide from growing alpha-1,4-glucan chains and the subsequent attachment of the oligosaccharide to the alpha-1,6 position. The chain is 1,4-alpha-glucan branching enzyme GlgB from Frankia casuarinae (strain DSM 45818 / CECT 9043 / HFP020203 / CcI3).